The primary structure comprises 343 residues: Aspartate carbamoyltransferase catalytic subunit (343 aa).

Positions 91 and 92 each coordinate carbamoyl phosphate. Lys119 serves as a coordination point for L-aspartate. Residues Arg141, His171, and Gln174 each coordinate carbamoyl phosphate. L-aspartate-binding residues include Arg204 and Arg259. Residues Gly300 and Pro301 each contribute to the carbamoyl phosphate site.

The protein belongs to the aspartate/ornithine carbamoyltransferase superfamily. ATCase family. Heterododecamer (2C3:3R2) of six catalytic PyrB chains organized as two trimers (C3), and six regulatory PyrI chains organized as three dimers (R2).

The enzyme catalyses carbamoyl phosphate + L-aspartate = N-carbamoyl-L-aspartate + phosphate + H(+). It functions in the pathway pyrimidine metabolism; UMP biosynthesis via de novo pathway; (S)-dihydroorotate from bicarbonate: step 2/3. In terms of biological role, catalyzes the condensation of carbamoyl phosphate and aspartate to form carbamoyl aspartate and inorganic phosphate, the committed step in the de novo pyrimidine nucleotide biosynthesis pathway. In Burkholderia ambifaria (strain MC40-6), this protein is Aspartate carbamoyltransferase catalytic subunit.